The chain runs to 398 residues: Polyferredoxin protein VhuB (398 aa).

11 consecutive 4Fe-4S ferredoxin-type domains span residues 2–31 (AGIKIQEDACLVCNACSKACPTEAIEIAPF), 25–53 (AIEIAPFKTCTLCFSCASACPTGALVENN), 54–83 (GKLIYNSSKCIKCGNCATACPTGIKKVDDR), 82–111 (DRFPYSKGHCVLCEKCVDACPIDIISIPGK), 123–152 (QEPIKVTEACVGCSECVPVCPVDAISIEDE), 152–181 (ELAVIDTEKCIYCSVCAQTCPWNAIYVAGK), 191–219 (KSFTVTEECIGCEKCVEVCPGDMITYNRE), 220–249 (DLIVKLPEACPACHLCEQNCPVDAISLEVE), 259–291 (EGLVWYEDKCNYCGPCAIKCPLCPTNAINMINQ), 300–331 (TKTDKDPEFRMCIRCGACVMKCPTGALKMGKI), and 339–368 (NRIEFSPALCNECGECVDVCPQDTLKLTGD). [4Fe-4S] cluster contacts are provided by Cys-11, Cys-14, Cys-17, Cys-21, Cys-34, Cys-37, Cys-40, Cys-44, Cys-63, Cys-66, Cys-69, Cys-73, Cys-91, Cys-94, Cys-97, Cys-101, Cys-132, Cys-135, Cys-138, Cys-142, Cys-161, Cys-164, Cys-167, Cys-171, Cys-199, Cys-202, Cys-205, Cys-209, Cys-229, Cys-232, Cys-235, Cys-239, Cys-268, Cys-271, Cys-274, Cys-278, Cys-311, Cys-314, Cys-317, Cys-321, Cys-348, Cys-351, Cys-354, Cys-358, Cys-377, Cys-380, Cys-383, and Cys-387.

Requires [4Fe-4S] cluster as cofactor.

This Methanococcus voltae protein is Polyferredoxin protein VhuB (vhuB).